A 240-amino-acid chain; its full sequence is uncharacterized protein (240 aa).

Positions Val-2–Ala-223 constitute an ABC transporter domain. Position 34–41 (Gly-34–Ser-41) interacts with ATP.

The protein belongs to the ABC transporter superfamily.

This is an uncharacterized protein from Haemophilus influenzae (strain ATCC 51907 / DSM 11121 / KW20 / Rd).